The primary structure comprises 520 residues: Cell division control protein 3 (520 aa).

Residues 1-24 (MSLKEEQVSIKQDPEQEERQHDQF) show a composition bias toward basic and acidic residues. Residues 1–83 (MSLKEEQVSI…SSQSEKGQVL (83 aa)) are disordered. An N-acetylserine modification is found at Ser-2. Ser-2 bears the Phosphoserine mark. Lys-4 is covalently cross-linked (Glycyl lysine isopeptide (Lys-Gly) (interchain with G-Cter in SUMO)). Ser-9 is subject to Phosphoserine. Residues Lys-11 and Lys-30 each participate in a glycyl lysine isopeptide (Lys-Gly) (interchain with G-Cter in SUMO) cross-link. Thr-47 carries the post-translational modification Phosphothreonine. Positions 51-64 (DSERFEAAESDVKV) are enriched in basic and acidic residues. Ser-60 carries the phosphoserine modification. Lys-63 is covalently cross-linked (Glycyl lysine isopeptide (Lys-Gly) (interchain with G-Cter in SUMO)). Residue Ser-77 is modified to Phosphoserine. The 296-residue stretch at 116–411 (NGFSFNLLCV…ENYRSSKLAK (296 aa)) folds into the Septin-type G domain. The tract at residues 126-133 (GPDGIGKT) is G1 motif. 126–133 (GPDGIGKT) is a GTP binding site. Residues 156–167 (ELANDQEEEEGQ) are compositionally biased toward acidic residues. Residues 156-181 (ELANDQEEEEGQGEGHENQSQEQRHK) form a disordered region. Positions 168–179 (GEGHENQSQEQR) are enriched in basic and acidic residues. Ser-175 is modified (phosphoserine). The G3 motif stretch occupies residues 204–207 (DTEG). GTP is bound by residues Gly-207, 287–295 (KSDILTDEE), Gly-344, and Arg-360. Residues 286–289 (AKSD) form a G4 motif region. Residue Lys-287 forms a Glycyl lysine isopeptide (Lys-Gly) (interchain with G-Cter in SUMO) linkage. The stretch at 427 to 508 (ISKQQEEKTL…INSASPNVNH (82 aa)) forms a coiled coil. Thr-468 is modified (phosphothreonine). The segment at 496–520 (ELSINSASPNVNHSPVPTKKKGFLR) is disordered. The segment covering 497–510 (LSINSASPNVNHSP) has biased composition (polar residues). Position 509 is a phosphoserine (Ser-509).

This sequence belongs to the TRAFAC class TrmE-Era-EngA-EngB-Septin-like GTPase superfamily. Septin GTPase family. Component of the septin complex which consists of CDC3, CDC10, CDC11, CDC12 and probably SHS1 and rearranges to a cortical collar of highly ordered filaments at the mother-bud-neck. A complex formed by CDC3, CDC10, CDC11 and CDC12 is capable of forming long filaments in vitro and the components seem to be present in a 2:2:2:2 arrangement in vivo. The filaments are proposed to be formed by the end-to-end polymerization of CDC3-CDC12-CDC11 complexes with CDC10 serving as a bridge to bundle the polymers into paired filaments. Component of the GIN4 complex composed of at least BNI5, CDC3, CDC10, CDC11, CDC12, GIN4, NAP1 and SHS1. Self-associates. Interacts with SIZ1 and SYP1. Post-translationally, phosphorylated by CDC28. Phosphorylation at the end of G1 may facilitate initiation of a new cell cycle by promoting disassembly of the obsolete septin ring from the previous cell cycle. Sumoylated during mitosis on the mother cell side of the bud neck by UBC9/SIZ1. Sumoylation probably plays a central role in regulating septin ring disassembly during the cell cycle.

The protein resides in the membrane. Its subcellular location is the bud neck. Septins are GTPases involved in cytokinesis that assemble early in the cell cycle as a patch at the incipient bud site and form a ring approximate 15 minutes before bud emergence, which transforms into an hour-glass shaped collar of cortical filaments that spans both sides of the mother-bud neck. This collar persists until just before cytokinesis, when it splits into two rings that occupy opposite sides of the neck. The septins at the bud neck serve as a structural scaffold that recruits different components involved in diverse processes at specific stages during the cell cycle. Many proteins bind asymmetrically to the septin collar. The septin assembly is regulated by protein kinases GIN4 and/or CLA4. May act by recruiting MYO1 and HOF1, a protein involved in septation, to the site of cleavage. Septins are also involved in cell morphogenesis, bud site selection, chitin deposition, cell cycle regulation, cell compartmentalization and spore wall formation. This is Cell division control protein 3 (CDC3) from Saccharomyces cerevisiae (strain ATCC 204508 / S288c) (Baker's yeast).